We begin with the raw amino-acid sequence, 248 residues long: MSLGSLAFTLFLTVVAGIKCNGTEVCAGSPGIPGTPGNHGLPGRDGRDGIKGDPGPPGPMGPPGGMPGLPGRDGLPGAPGAPGEHGDKGEPGERGLPGFPAYLDEELQTASYEIKHQILQTMGVLSLQGSMLSVGDKVFSTNGQSVNFDTIREMCTRAGGHIAAPRNPEENEAIASITKKYNTYPYLGVIEGQTPGDFHYLDGASVNYTNWYPGEPRGRGKEKCVEMYTDGKWNDKGCLQYRLAICEF.

The N-terminal stretch at 1-20 (MSLGSLAFTLFLTVVAGIKC) is a signal peptide. N-linked (GlcNAc...) asparagine glycosylation occurs at Asn21. One can recognise a Collagen-like domain in the interval 28–100 (GSPGIPGTPG…PGERGLPGFP (73 aa)). Positions 28–100 (GSPGIPGTPG…PGERGLPGFP (73 aa)) are disordered. Residues Pro30, Pro33, Pro36, Pro42, Pro54, Pro57, Pro63, Pro67, Pro70, and Pro76 each carry the 4-hydroxyproline modification. A compositionally biased stretch (basic and acidic residues) spans 42 to 51 (PGRDGRDGIK). The span at 54–65 (PGPPGPMGPPGG) shows a compositional bias: pro residues. Residues 69 to 82 (LPGRDGLPGAPGAP) are compositionally biased toward low complexity. The segment covering 84–93 (EHGDKGEPGE) has biased composition (basic and acidic residues). A C-type lectin domain is found at 132-248 (LSVGDKVFST…LQYRLAICEF (117 aa)). Disulfide bonds link Cys155-Cys246 and Cys224-Cys238. The N-linked (GlcNAc...) asparagine glycan is linked to Asn207. Ca(2+) is bound by residues Glu215, Arg217, Asn234, and Asp235.

Belongs to the SFTPA family. In terms of assembly, oligomeric complex of 6 set of homotrimers.

The protein resides in the secreted. It is found in the extracellular space. The protein localises to the extracellular matrix. Its subcellular location is the surface film. Functionally, in presence of calcium ions, it binds to surfactant phospholipids and contributes to lower the surface tension at the air-liquid interface in the alveoli of the mammalian lung and is essential for normal respiration. Enhances the expression of MYO18A/SP-R210 on alveolar macrophages. The chain is Pulmonary surfactant-associated protein A (Sftpa1) from Mus musculus (Mouse).